The primary structure comprises 254 residues: Pimeloyl-[acyl-carrier protein] methyl ester esterase (254 aa).

Positions 14-242 constitute an AB hydrolase-1 domain; it reads LVLLHGWGMN…ASHAPFISHP (229 aa). Substrate-binding positions include Trp-20, 82-83, and 143-147; these read SL and FLAIQ. Ser-82 acts as the Nucleophile in catalysis. Residues Asp-207 and His-235 contribute to the active site. His-235 is a binding site for substrate.

This sequence belongs to the AB hydrolase superfamily. Carboxylesterase BioH family. As to quaternary structure, monomer.

It is found in the cytoplasm. It catalyses the reaction 6-carboxyhexanoyl-[ACP] methyl ester + H2O = 6-carboxyhexanoyl-[ACP] + methanol + H(+). It functions in the pathway cofactor biosynthesis; biotin biosynthesis. Functionally, the physiological role of BioH is to remove the methyl group introduced by BioC when the pimeloyl moiety is complete. It allows to synthesize pimeloyl-ACP via the fatty acid synthetic pathway through the hydrolysis of the ester bonds of pimeloyl-ACP esters. This Aeromonas salmonicida (strain A449) protein is Pimeloyl-[acyl-carrier protein] methyl ester esterase.